We begin with the raw amino-acid sequence, 370 residues long: MSLSSLPGSFSSSSHPLVPYGWDADWEAEFAPYDSEGLLAGRVIRVDRGQCDVVTPGGMLRADTAFVTPHDPMRVVCTGDWVAVEPAGDPRYVRTYLPRRSAFVRSTSSKRSEGQILAANVDYAVVAVSLAVELDLGRVERFLALAWESGAQPVVVLTKADLVPDATTLSYLVQDVETAAPGVPVLSVSSNLGEGLDVLAAVLSGGTSVLLGQSGAGKSTLANALLGEDVMKVHATRDVDGKGRHTTTTRNLLALPGGGVLIDTPGLRGVGLWDAETGVNQVFSEIEALAAECRFHDCAHTAEPGCAVLAALDTGELPERRLDSYRKLLRENQRIVAKTDARLRAEIRRDWKRKGAEGKAAMEAKRGQWG.

The CP-type G domain occupies 111-270 (RSEGQILAAN…LIDTPGLRGV (160 aa)). Residues 158–161 (TKAD) and 212–220 (GQSGAGKST) each bind GTP. Residues Cys293, Cys298, His300, and Cys306 each contribute to the Zn(2+) site.

The protein belongs to the TRAFAC class YlqF/YawG GTPase family. RsgA subfamily. In terms of assembly, monomer. Associates with 30S ribosomal subunit, binds 16S rRNA. Requires Zn(2+) as cofactor.

The protein localises to the cytoplasm. One of several proteins that assist in the late maturation steps of the functional core of the 30S ribosomal subunit. Helps release RbfA from mature subunits. May play a role in the assembly of ribosomal proteins into the subunit. Circularly permuted GTPase that catalyzes slow GTP hydrolysis, GTPase activity is stimulated by the 30S ribosomal subunit. This chain is Small ribosomal subunit biogenesis GTPase RsgA, found in Streptomyces avermitilis (strain ATCC 31267 / DSM 46492 / JCM 5070 / NBRC 14893 / NCIMB 12804 / NRRL 8165 / MA-4680).